Here is a 379-residue protein sequence, read N- to C-terminus: Chaperone protein DnaJ (379 aa).

Positions Asp5–Gly70 constitute a J domain. Residues Gly134–Ser212 form a CR-type zinc finger. Residues Cys147, Cys150, Cys164, Cys167, Cys186, Cys189, Cys200, and Cys203 each contribute to the Zn(2+) site. 4 CXXCXGXG motif repeats span residues Cys147 to Gly154, Cys164 to Gly171, Cys186 to Gly193, and Cys200 to Gly207.

The protein belongs to the DnaJ family. Homodimer. It depends on Zn(2+) as a cofactor.

It localises to the cytoplasm. Its function is as follows. Participates actively in the response to hyperosmotic and heat shock by preventing the aggregation of stress-denatured proteins and by disaggregating proteins, also in an autonomous, DnaK-independent fashion. Unfolded proteins bind initially to DnaJ; upon interaction with the DnaJ-bound protein, DnaK hydrolyzes its bound ATP, resulting in the formation of a stable complex. GrpE releases ADP from DnaK; ATP binding to DnaK triggers the release of the substrate protein, thus completing the reaction cycle. Several rounds of ATP-dependent interactions between DnaJ, DnaK and GrpE are required for fully efficient folding. Also involved, together with DnaK and GrpE, in the DNA replication of plasmids through activation of initiation proteins. This chain is Chaperone protein DnaJ, found in Salmonella agona (strain SL483).